We begin with the raw amino-acid sequence, 319 residues long: Probable phytol kinase 3, chloroplastic (319 aa).

The N-terminal 22 residues, 1 to 22 (MMFLSFNMISGGNTLQRFDPVA), are a transit peptide targeting the chloroplast. 6 helical membrane-spanning segments follow: residues 83-103 (DPLV…LSFL), 123-143 (LVHI…STET), 147-167 (FFAA…GLGI), 185-205 (ELLK…IIYW), 252-272 (ATAG…FGFI), and 278-298 (LVLG…LPIS).

It belongs to the polyprenol kinase family.

The protein localises to the plastid. Its subcellular location is the chloroplast membrane. The enzyme catalyses phytol + CTP = phytyl phosphate + CDP + H(+). The protein operates within cofactor biosynthesis; tocopherol biosynthesis. Its function is as follows. Involved in the activation and reutilization of phytol from chlorophyll degradation in plant metabolism, including tocopherol biosynthesis. Catalyzes the conversion of phytol to phytol monophosphate (PMP). The chain is Probable phytol kinase 3, chloroplastic from Glycine max (Soybean).